The primary structure comprises 447 residues: N-succinylarginine dihydrolase (447 aa).

Substrate-binding positions include 19-28 (AGLSFGNEAS), N110, and 137-138 (HR). The active site involves E174. Position 214 (R214) interacts with substrate. The active site involves H250. 2 residues coordinate substrate: D252 and N365. C371 (nucleophile) is an active-site residue.

It belongs to the succinylarginine dihydrolase family. As to quaternary structure, homodimer.

It catalyses the reaction N(2)-succinyl-L-arginine + 2 H2O + 2 H(+) = N(2)-succinyl-L-ornithine + 2 NH4(+) + CO2. It participates in amino-acid degradation; L-arginine degradation via AST pathway; L-glutamate and succinate from L-arginine: step 2/5. Catalyzes the hydrolysis of N(2)-succinylarginine into N(2)-succinylornithine, ammonia and CO(2). The chain is N-succinylarginine dihydrolase from Acinetobacter baumannii (strain SDF).